We begin with the raw amino-acid sequence, 101 residues long: Small ribosomal subunit protein bS18c (101 aa).

Belongs to the bacterial ribosomal protein bS18 family. Component of the chloroplast small ribosomal subunit (SSU). Mature 70S chloroplast ribosomes of higher plants consist of a small (30S) and a large (50S) subunit. The 30S small subunit contains 1 molecule of ribosomal RNA (16S rRNA) and 24 different proteins. The 50S large subunit contains 3 rRNA molecules (23S, 5S and 4.5S rRNA) and 33 different proteins.

Its subcellular location is the plastid. The protein resides in the chloroplast. In terms of biological role, component of the chloroplast ribosome (chloro-ribosome), a dedicated translation machinery responsible for the synthesis of chloroplast genome-encoded proteins, including proteins of the transcription and translation machinery and components of the photosynthetic apparatus. This chain is Small ribosomal subunit protein bS18c (RPS18), found in Spinacia oleracea (Spinach).